The primary structure comprises 507 residues: Phosphoprotein (507 aa).

Polar residues predominate over residues 31–51; that stretch reads EVSSLRDQTCNPGQENGTTGM. 3 disordered regions span residues 31 to 86, 123 to 172, and 242 to 307; these read EVSS…CGER, IEDA…GYSF, and GIVA…DSEY. A compositionally biased stretch (acidic residues) spans 147-160; that stretch reads SLDDSTEDSGEDYS. Position 151 is a phosphoserine (Ser151). Polar residues-rich tracts occupy residues 246–271 and 289–300; these read GSTS…SAGN and SGTQLPPRTSNE. Positions 304–376 are multimerization; it reads DSEYDDELFS…LSSIMIAIPG (73 aa). Positions 310 to 339 form a coiled coil; sequence ELFSEIQEIRSAITKLTEDNQAILTKLDTL. The segment at 459-507 is interaction with the nucleocapsid (N-RNA); it reads PSKAVLASLIRSSRVDQSHKHNMLALLKNIKGDDNLNEFYQMVKSITHA.

Belongs to the morbillivirus P protein family. As to quaternary structure, homotetramer. Interacts (via multimerization domain) with polymerase L; this interaction forms the polymerase L-P complex. Interacts (via N-terminus) with N0 (via Ncore); this interaction allows P to chaperon N0 to avoid N polymerization before encapsidation. Interacts (via C-terminus) with N-RNA template; this interaction positions the polymerase on the template for both transcription and replication. Phosphorylation on serines by host CK2 is necessary for the formation of viral factories.

Functionally, essential cofactor of the RNA polymerase L that plays a central role in the transcription and replication by forming the polymerase complex with RNA polymerase L and recruiting L to the genomic N-RNA template for RNA synthesis. Also plays a central role in the encapsidation of nascent RNA chains by forming the encapsidation complex with the nucleocapsid protein N (N-P complex). Acts as a chaperone for newly synthesized free N protein, so-called N0, allowing encapsidation of nascent RNA chains during replication. The nucleoprotein protein N prevents excessive phosphorylation of P, which leads to down-regulation of viral transcription/ replication. Participates, together with N, in the formation of viral factories (viroplasms), which are large inclusions in the host cytoplasm where replication takes place. This is Phosphoprotein (P/V) from Canine distemper virus (strain Onderstepoort) (CDV).